A 288-amino-acid chain; its full sequence is Acetyl-coenzyme A carboxylase carboxyl transferase subunit beta (288 aa).

The region spanning Ile30–Ala288 is the CoA carboxyltransferase N-terminal domain. Zn(2+)-binding residues include Cys34, Cys37, Cys53, and Cys56. The C4-type zinc finger occupies Cys34 to Cys56.

The protein belongs to the AccD/PCCB family. In terms of assembly, acetyl-CoA carboxylase is a heterohexamer composed of biotin carboxyl carrier protein (AccB), biotin carboxylase (AccC) and two subunits each of ACCase subunit alpha (AccA) and ACCase subunit beta (AccD). It depends on Zn(2+) as a cofactor.

The protein localises to the cytoplasm. The catalysed reaction is N(6)-carboxybiotinyl-L-lysyl-[protein] + acetyl-CoA = N(6)-biotinyl-L-lysyl-[protein] + malonyl-CoA. The protein operates within lipid metabolism; malonyl-CoA biosynthesis; malonyl-CoA from acetyl-CoA: step 1/1. Its function is as follows. Component of the acetyl coenzyme A carboxylase (ACC) complex. Biotin carboxylase (BC) catalyzes the carboxylation of biotin on its carrier protein (BCCP) and then the CO(2) group is transferred by the transcarboxylase to acetyl-CoA to form malonyl-CoA. This is Acetyl-coenzyme A carboxylase carboxyl transferase subunit beta from Staphylococcus haemolyticus (strain JCSC1435).